The primary structure comprises 245 residues: 4-hydroxy-tetrahydrodipicolinate reductase (245 aa).

Residues 7-12 (GAKGKV), 75-77 (GTT), and 102-105 (APNF) contribute to the NAD(+) site. The active-site Proton donor/acceptor is the histidine 132. A (S)-2,3,4,5-tetrahydrodipicolinate-binding site is contributed by histidine 133. Lysine 136 serves as the catalytic Proton donor. 142–143 (GT) is a binding site for (S)-2,3,4,5-tetrahydrodipicolinate.

This sequence belongs to the DapB family.

Its subcellular location is the cytoplasm. It catalyses the reaction (S)-2,3,4,5-tetrahydrodipicolinate + NAD(+) + H2O = (2S,4S)-4-hydroxy-2,3,4,5-tetrahydrodipicolinate + NADH + H(+). It carries out the reaction (S)-2,3,4,5-tetrahydrodipicolinate + NADP(+) + H2O = (2S,4S)-4-hydroxy-2,3,4,5-tetrahydrodipicolinate + NADPH + H(+). It functions in the pathway amino-acid biosynthesis; L-lysine biosynthesis via DAP pathway; (S)-tetrahydrodipicolinate from L-aspartate: step 4/4. Catalyzes the conversion of 4-hydroxy-tetrahydrodipicolinate (HTPA) to tetrahydrodipicolinate. This chain is 4-hydroxy-tetrahydrodipicolinate reductase, found in Mycobacterium marinum (strain ATCC BAA-535 / M).